Reading from the N-terminus, the 67-residue chain is Large ribosomal subunit protein bL35 (67 aa).

Belongs to the bacterial ribosomal protein bL35 family.

The protein is Large ribosomal subunit protein bL35 of Bartonella henselae (strain ATCC 49882 / DSM 28221 / CCUG 30454 / Houston 1) (Rochalimaea henselae).